The chain runs to 541 residues: MAKIIAFDEEARRGLERGMNQLADAVKVTLGPKGRNVVLEKKWGAPTITNDGVSIAKEIELEDPYEKIGAELVKEVAKKTDDVAGDGTTTATVLAQALVKEGLRNVAAGANPMALKRGIEKAVEAVSAALLEQAKDVETKEQIASTASISAADTQIGELIAEAMDKVGKEGVITVEESQTFGLELELTEGMRFDKGYISAYFATDMERMEASLDDPYILIANSKIGNVKDLLPLLEKVMQSGKPLLIIAEDVEGEALSTLVVNKIRGTFKSVAVKAPGFGDRRKAMLGDIAILTGGEVISEEVGLKLENATLDLLGSARKVVITKDETTIVDGAGSADQVQGRVNQIRAEIENSDSDYDREKLQERLAKLAGGVAVIKAGAATEVELKERKHRIEDAVRNAKAAVEEGIVAGGGVALLQASQVFEKLELTGDEATGANAVKLALEAPLKQIAVNGGLEGGVVVEKVRNLTVGHGLNAATGEYVDMIAEGIIDPAKVTRSALQNAASIAALFLTTEAVIADKPEKAAPAGAPGGMPGGDMDF.

Residues 29 to 32, 86 to 90, G413, 476 to 478, and D492 contribute to the ATP site; these read TLGP, DGTTT, and NAA.

Belongs to the chaperonin (HSP60) family. In terms of assembly, forms a cylinder of 14 subunits composed of two heptameric rings stacked back-to-back. Interacts with the co-chaperonin GroES.

The protein localises to the cytoplasm. It catalyses the reaction ATP + H2O + a folded polypeptide = ADP + phosphate + an unfolded polypeptide.. In terms of biological role, together with its co-chaperonin GroES, plays an essential role in assisting protein folding. The GroEL-GroES system forms a nano-cage that allows encapsulation of the non-native substrate proteins and provides a physical environment optimized to promote and accelerate protein folding. The chain is Chaperonin GroEL 2 from Streptomyces coelicolor (strain ATCC BAA-471 / A3(2) / M145).